The chain runs to 224 residues: UPF0758 protein PSPA7_6095 (224 aa).

The region spanning 102–224 (VLESPQAVRD…PLSLAEYGWM (123 aa)) is the MPN domain. The Zn(2+) site is built by His173, His175, and Asp186. A JAMM motif motif is present at residues 173–186 (HNHPSGDARPSLAD).

The protein belongs to the UPF0758 family.

This Pseudomonas paraeruginosa (strain DSM 24068 / PA7) (Pseudomonas aeruginosa (strain PA7)) protein is UPF0758 protein PSPA7_6095.